Consider the following 183-residue polypeptide: ATP synthase subunit delta (183 aa).

The protein belongs to the ATPase delta chain family. F-type ATPases have 2 components, F(1) - the catalytic core - and F(0) - the membrane proton channel. F(1) has five subunits: alpha(3), beta(3), gamma(1), delta(1), epsilon(1). F(0) has three main subunits: a(1), b(2) and c(10-14). The alpha and beta chains form an alternating ring which encloses part of the gamma chain. F(1) is attached to F(0) by a central stalk formed by the gamma and epsilon chains, while a peripheral stalk is formed by the delta and b chains.

It is found in the cell inner membrane. Functionally, f(1)F(0) ATP synthase produces ATP from ADP in the presence of a proton or sodium gradient. F-type ATPases consist of two structural domains, F(1) containing the extramembraneous catalytic core and F(0) containing the membrane proton channel, linked together by a central stalk and a peripheral stalk. During catalysis, ATP synthesis in the catalytic domain of F(1) is coupled via a rotary mechanism of the central stalk subunits to proton translocation. Its function is as follows. This protein is part of the stalk that links CF(0) to CF(1). It either transmits conformational changes from CF(0) to CF(1) or is implicated in proton conduction. This chain is ATP synthase subunit delta, found in Nitratidesulfovibrio vulgaris (strain DSM 19637 / Miyazaki F) (Desulfovibrio vulgaris).